A 312-amino-acid polypeptide reads, in one-letter code: Olfactory receptor 6C75 (312 aa).

The Extracellular segment spans residues 1-23 (MRNSTAVTDFILLGLTSDPQWQV). N-linked (GlcNAc...) asparagine glycosylation occurs at N3. The helical transmembrane segment at 24–44 (VLFIFLLVTYMLSVTGNLIII) threads the bilayer. Over 45–63 (TLTLSDPHLQTPMYFFLRN) the chain is Cytoplasmic. The chain crosses the membrane as a helical span at residues 64 to 84 (FSFLEISFTSVCIPRFLVTVV). The Extracellular segment spans residues 85 to 95 (TGNRTISYNGC). A disulfide bridge connects residues C95 and C177. Residues 96-116 (VAQLFFFIFLGVTEFYLLAAM) form a helical membrane-spanning segment. Over 117 to 140 (SYDRCMAICKPLHYTIIMSTRVCT) the chain is Cytoplasmic. Residues 141–161 (LLVFSSWLAGFLIIFPPVMLL) form a helical membrane-spanning segment. Residues 162-194 (LQLDFCASNVIDHFICDSSPMLQLSCTNTHFLE) are Extracellular-facing. The chain crosses the membrane as a helical span at residues 195–215 (LMAFFLAVVTLMVTLTLVILS). Residues 216–237 (YTNIIRTILKIPSMSQRKKAFS) lie on the Cytoplasmic side of the membrane. A helical membrane pass occupies residues 238–258 (TCSSHMIVVSISYSSCIFMYI). Residues 259–269 (KTSARERVTLS) lie on the Extracellular side of the membrane. Residues 270-290 (KGVAVLNTSVAPLLNPFIYTL) form a helical membrane-spanning segment. Over 291 to 312 (RNKQVKQAFKSMVQKMIFSLNK) the chain is Cytoplasmic.

It belongs to the G-protein coupled receptor 1 family.

It localises to the cell membrane. Its function is as follows. Odorant receptor. The chain is Olfactory receptor 6C75 (OR6C75) from Homo sapiens (Human).